Reading from the N-terminus, the 365-residue chain is Aspartate-semialdehyde dehydrogenase (365 aa).

8 residues coordinate NADP(+): T12, G13, S14, V15, S37, S40, L85, and D86. The active-site Acyl-thioester intermediate is the C156. An NADP(+)-binding site is contributed by G188. Catalysis depends on H256, which acts as the Proton acceptor. N343 contacts NADP(+).

The protein belongs to the aspartate-semialdehyde dehydrogenase family. In terms of assembly, homotetramer; dimer of dimers.

The protein resides in the cytoplasm. Its subcellular location is the cytosol. It is found in the nucleus. The catalysed reaction is L-aspartate 4-semialdehyde + phosphate + NADP(+) = 4-phospho-L-aspartate + NADPH + H(+). The protein operates within amino-acid biosynthesis; L-methionine biosynthesis via de novo pathway; L-homoserine from L-aspartate: step 2/3. It participates in amino-acid biosynthesis; L-threonine biosynthesis; L-threonine from L-aspartate: step 2/5. Its activity is regulated as follows. Inhibited by the non-competitive inhibitors phthalaldehyde and naphthalene, the competitive inhibitor 1,4-benzoquinone and derivates such as 2-chloro-3-methoxy-1,4-naphthoquinone, 2,3-dichloro-1,4-naphthoquinone, 2-chloro-1,4-naphthoquinone, 2-bromo-1,4-naphthoquinone and 2,3-dichloro-5,8-dihydroxy-1,4-naphthoquinone, and 5-aminoisoquinoline. Inhibited by vinyl sulfones. Catalyzes the NADPH-dependent formation of L-aspartate 4-semialdehyde (L-ASA) by the reductive dephosphorylation of 4-phospho-L-aspartate. Mediates the second step in the biosynthesis of amino acids that derive from aspartate (the aspartate family of amino acids), including methioinine and threonine, the latter of which is a precursor to isoleucine. This is Aspartate-semialdehyde dehydrogenase from Candida albicans (strain SC5314 / ATCC MYA-2876) (Yeast).